A 335-amino-acid polypeptide reads, in one-letter code: Heat-inducible transcription repressor HrcA (335 aa).

This sequence belongs to the HrcA family.

Functionally, negative regulator of class I heat shock genes (grpE-dnaK-dnaJ and groELS operons). Prevents heat-shock induction of these operons. The polypeptide is Heat-inducible transcription repressor HrcA (Mesomycoplasma hyopneumoniae (strain 232) (Mycoplasma hyopneumoniae)).